Here is a 696-residue protein sequence, read N- to C-terminus: Serotransferrin (696 aa).

Transferrin-like domains follow at residues Val6–Glu332 and Val346–Lys672. 2 disulfide bridges follow: Cys9–Cys47 and Cys19–Cys38. At Arg23 the chain carries Dimethylated arginine. Asn25 carries an N-linked (GlcNAc...) asparagine glycan. The Fe(3+) site is built by Asp62 and Tyr94. Intrachain disulfides connect Cys117–Cys198, Cys157–Cys173, Cys160–Cys181, Cys170–Cys183, and Cys231–Cys245. Hydrogencarbonate contacts are provided by Thr119, Arg123, Ala125, and Gly126. Tyr192 contacts Fe(3+). His253 provides a ligand contact to Fe(3+). 11 disulfides stabilise this stretch: Cys343-Cys605, Cys349-Cys381, Cys359-Cys372, Cys406-Cys682, Cys423-Cys646, Cys456-Cys532, Cys480-Cys673, Cys490-Cys504, Cys501-Cys515, Cys572-Cys586, and Cys624-Cys629. At Ser374 the chain carries Phosphoserine. Fe(3+) contacts are provided by Asp396 and Tyr431. Thr458, Arg462, Ala464, and Gly465 together coordinate hydrogencarbonate. The N-linked (GlcNAc...) asparagine glycan is linked to Asn497. Tyr526 contributes to the Fe(3+) binding site. Position 594 (His594) interacts with Fe(3+). Ser674 bears the Phosphoserine mark.

The protein belongs to the transferrin family. Monomer. Part of a complex composed of SLC40A1/ferroportin, TF/transferrin and HEPH/hephaestin that transfers iron from cells to transferrin. Expressed by the liver and secreted in plasma.

The protein localises to the secreted. Functionally, transferrins are iron binding transport proteins which can bind two Fe(3+) ions in association with the binding of an anion, usually bicarbonate. It is responsible for the transport of iron from sites of absorption and heme degradation to those of storage and utilization. Serum transferrin may also have a further role in stimulating cell proliferation. This Sus scrofa (Pig) protein is Serotransferrin (TF).